The sequence spans 360 residues: Histidinol-phosphate aminotransferase (360 aa).

Lys-222 is modified (N6-(pyridoxal phosphate)lysine).

It belongs to the class-II pyridoxal-phosphate-dependent aminotransferase family. Histidinol-phosphate aminotransferase subfamily. In terms of assembly, homodimer. Pyridoxal 5'-phosphate is required as a cofactor.

It catalyses the reaction L-histidinol phosphate + 2-oxoglutarate = 3-(imidazol-4-yl)-2-oxopropyl phosphate + L-glutamate. It functions in the pathway amino-acid biosynthesis; L-histidine biosynthesis; L-histidine from 5-phospho-alpha-D-ribose 1-diphosphate: step 7/9. In Listeria innocua serovar 6a (strain ATCC BAA-680 / CLIP 11262), this protein is Histidinol-phosphate aminotransferase.